Consider the following 359-residue polypeptide: Type-1 angiotensin II receptor B (359 aa).

Residues 1 to 25 (MILNSSIEDGIKRIQDDCPKAGRHN) lie on the Extracellular side of the membrane. N-linked (GlcNAc...) asparagine glycosylation is present at Asn4. Residues Gln15 and Asp17 each coordinate angiotensin II. 2 disulfides stabilise this stretch: Cys18/Cys274 and Cys101/Cys180. The chain crosses the membrane as a helical span at residues 26 to 55 (YIFVMIPTLYSIIFVVGIFGNSLVVIVIYF). The Cytoplasmic portion of the chain corresponds to 56–61 (YMKLKT). A helical membrane pass occupies residues 62 to 89 (VASVFLLNLALADLCFLLTLPLWAVYTA). The Extracellular segment spans residues 90 to 98 (MEYQWPFGN). A helical membrane pass occupies residues 99 to 125 (HLCKIASASVSFNLYASVFLLTCLSID). Topologically, residues 126–141 (RYLAIVHPMKSRLRRT) are cytoplasmic. The chain crosses the membrane as a helical span at residues 142-165 (MLVAKVTCIIIWLMAGLASLPAVI). The Extracellular portion of the chain corresponds to 166-190 (HRNVYFIENTNITVCAFHYESQNST). Position 167 (Arg167) interacts with angiotensin II. A glycan (N-linked (GlcNAc...) asparagine) is linked at Asn176. Angiotensin II is bound by residues Phe182, His183, and Tyr184. Asn188 carries an N-linked (GlcNAc...) asparagine glycan. A helical membrane pass occupies residues 191-216 (LPIGLGLTKNILGFVFPFVIILTSYT). Position 199 (Lys199) interacts with angiotensin II. At 217 to 239 (LIWKALKKAYKIQKNTPRNDDIF) the chain is on the cytoplasmic side. Residues 240-268 (RIIMAIVLFFFFSWVPHQIFSFLDVLIQL) form a helical membrane-spanning segment. Residues 269–278 (GVIHDCEIAD) lie on the Extracellular side of the membrane. A helical membrane pass occupies residues 279–304 (VVDTAMPITICIAYFNNCLNPLFYGF). At 305 to 359 (LGKKFKRYFLQLLKYIPPKARSHAGLSTKMSTLSYRPSDNMSSSARKSAYCFEVE) the chain is on the cytoplasmic side. Cys355 is lipidated: S-palmitoyl cysteine.

This sequence belongs to the G-protein coupled receptor 1 family. As to quaternary structure, interacts with MAS1. Interacts with ARRB1. Interacts with FLNA (via filamin repeat 21); increases PKA-mediated phosphorylation of FLNA. Post-translationally, C-terminal Ser or Thr residues may be phosphorylated.

The protein localises to the cell membrane. In terms of biological role, receptor for angiotensin II, a vasoconstricting peptide, which acts as a key regulator of blood pressure and sodium retention by the kidney. The activated receptor in turn couples to G-alpha proteins G(q) (GNAQ, GNA11, GNA14 or GNA15) and thus activates phospholipase C and increases the cytosolic Ca(2+) concentrations, which in turn triggers cellular responses such as stimulation of protein kinase C. The protein is Type-1 angiotensin II receptor B (Agtr1b) of Mus musculus (Mouse).